An 828-amino-acid chain; its full sequence is MLFGVKLANEVYPPWKGSYINYEGLKKFLKEDSVKDGSNDKKARWDDSDESKFVEELDKELEKVYGFQLKKYNNLMERLSHLEKQTDTEAAIKALDADAFQRVLEELLSESTELDNFKRLNFTGFAKIVKKHDKLYPKYPSVKSLLEVRLKELPSHSEEYSPLLYRISFLYNILRSNFNTASEPLASASKFSSIVSNDIDMNFRSFKFWVHNDNLMEVKTRILRHLPVLVYANVPSENDDLVNRFESDISNNDEIVGSSSSTSSVEHGLGARSFDPLINTLYFDNEHFELYNDKLLKLNSAPTLRLRWTGQLSDKPDIFLEKKTLIEDEATGKSEFDLTKLQLKQKFINGFIFEGDKKFKEQTLKKLKESGTAGRDLERLEEDFSEIQNFIIKNELQPVFRTVYTRTAFQIPGDDKIRVTIDSNIVFIKEDSFDRERPIRDPNTWHRTDIDANVANPLKFLRGGEYAKFPYSVMEIKVKSSLDSSMSASSMISNVKLPKKHGQWLNDLTNSHLVKEIPKFSIFVQGVASLYGDDEKLDILPFWLPDLETDIRQDPKQAYEEEKKKLLKQKEIQKKIDGMRRLSNLKEPQHQAAVPVSQEENERITSQGDLEADGSSDEETEQEPHSKRSKKVRRRKPKATFLRILAGRDPKLMGVDSEEEEIELPPGVKKPLNLLKNAGPVNVEAKVWLANERTFNRWLSVTSLLSVLTFSIYNSVKKAEYPTLANYMAYVYFGLTIFCALWSYSIYMKRVDIIQQRSGQHLDAPLGPVLVSIVLFVTLVVNFVMAFRNAAKSRQELQIQNLEVPERIPEVLRPLQNYLFKLMGPSSD.

One can recognise an SPX domain in the interval 1–146 (MLFGVKLANE…PKYPSVKSLL (146 aa)). The Cytoplasmic segment spans residues 1-693 (MLFGVKLANE…EAKVWLANER (693 aa)). The tract at residues 127-134 (KIVKKHDK) is important for inositol polyphosphate binding. Residues serine 182, serine 187, serine 196, serine 264, serine 583, serine 615, and serine 616 each carry the phosphoserine modification. Residues 580-636 (RRLSNLKEPQHQAAVPVSQEENERITSQGDLEADGSSDEETEQEPHSKRSKKVRRRK) form a disordered region. Positions 610–621 (LEADGSSDEETE) are enriched in acidic residues. Phosphothreonine is present on threonine 620. A Phosphoserine modification is found at serine 626. Positions 627–636 (KRSKKVRRRK) are enriched in basic residues. Phosphoserine is present on serine 657. A helical membrane pass occupies residues 694–716 (TFNRWLSVTSLLSVLTFSIYNSV). Residues 717–727 (KKAEYPTLANY) are Vacuolar-facing. The helical transmembrane segment at 728–748 (MAYVYFGLTIFCALWSYSIYM) threads the bilayer. Residues 749 to 766 (KRVDIIQQRSGQHLDAPL) lie on the Cytoplasmic side of the membrane. A helical membrane pass occupies residues 767–787 (GPVLVSIVLFVTLVVNFVMAF). Topologically, residues 788–828 (RNAAKSRQELQIQNLEVPERIPEVLRPLQNYLFKLMGPSSD) are vacuolar.

Belongs to the VTC2/3 family. In terms of assembly, the VTC core complex is an integral membrane heterooligomer composed of the catalytic subunit VTC4 and the accessory subunits VTC1, VTC2 and VTC3. The complex exists in 2 different sub-complexes: VTC1-VTC2-VCT4 and VCT1-VTC3-VTC4. The VCT1-VTC3-VTC4 subcomplex is mostly found on the vacuolar membrane. The VTC1-VTC2-VCT4 subcomplex is observed in the cell periphery, probably ER and nuclear envelope, but localizes to the vacuole under phosphate starvation. Each subunit contains 3 transmembrane helices. VTC1 is a small membrane protein without hydrophilic domain. VTC2, VTC3 and VTC4 are related and have 2 hydrophilic domains that face the cytosol, an N-terminal SPX domain and the central core domain. The central core in VTC4 is the catalytic domain, with the essential catalytic lysine replaced by isoleucine and leucine in VTC2 and VTC3, respectively. The core complex associates with the accessory subunit VTC5. The complex interacts with the v-SNARE NYV1 and with the V(0) subunit of V-ATPase VPH1.

It localises to the vacuole membrane. Its subcellular location is the cytoplasm. It is found in the cell cortex. The protein localises to the endoplasmic reticulum membrane. The protein resides in the cytoplasmic vesicle. It localises to the autophagosome membrane. Accessory subunit of the vacuolar transporter chaperone (VTC) complex. The VTC complex acts as a vacuolar polyphosphate polymerase that catalyzes the synthesis of inorganic polyphosphate (polyP) via transfer of phosphate from ATP to a growing polyP chain, releasing ADP. VTC exposes its catalytic domain VTC4 to the cytosol, where the growing polyP chain winds through a tunnel-shaped pocket, integrating cytoplasmic polymer synthesis with polyP membrane translocation. The VTC complex carries 9 vacuolar transmembrane domains, which are likely to constitute the translocation channel into the organelle lumen. PolyP synthesis is tightly coupled to its transport into the vacuole lumen, in order to avoid otherwise toxic intermediates in the cytosol, and it depends on the proton gradient across the membrane, formed by V-ATPase. Binds inositol hexakisphosphate (Ins6P) and similar inositol polyphosphates, such as 5-diphospho-inositol pentakisphosphate (5-InsP7); these are important intracellular signaling molecules. Inositol polyphosphate binding promotes vacuolar polyphosphate synthesis. The VTC complex also plays a role in vacuolar membrane fusion. Required for SEC18/NSF activity in SNARE priming, membrane binding of LMA1 and V(0) trans-complex formation. The chain is Vacuolar transporter chaperone complex subunit 2 from Saccharomyces cerevisiae (strain ATCC 204508 / S288c) (Baker's yeast).